We begin with the raw amino-acid sequence, 358 residues long: MEMTMRWFGSNADKVELSEIAQVPGVKGVVGMIMDIPAGEVWPKERIKALKEEIEAAGLSLKVIESVNIHDDIKIGLPTRDKYIENYKETIRNLAEFGIEVICYNFMPVFDWLKSDLDYRLADNSQTMAFVAEDIPENPQEIIDRVQAADGGFSLPGWEPERLSEVKDLFEAYKNVDEHKLRENFAYFLKAIIPTCEEVGIKMAVHPDDPPYPMFGLPRVVKNREDLDWICNVVDSPSNAITLCTGSIAEDPANNVYEIMAEFVKRDRIPFAHVRNIKFLPSGEKDFYEAPHMSEYGSLDMYKILKAMYDNGFDGYIRPDHGRMIWGETGRPGYGLYDRALGASYLNGLWEALEKNKQ.

It belongs to the mannonate dehydratase family. The cofactor is Fe(2+). Mn(2+) is required as a cofactor.

It carries out the reaction D-mannonate = 2-dehydro-3-deoxy-D-gluconate + H2O. The protein operates within carbohydrate metabolism; pentose and glucuronate interconversion. In terms of biological role, catalyzes the dehydration of D-mannonate. This chain is Mannonate dehydratase, found in Lactococcus lactis subsp. cremoris (strain MG1363).